A 296-amino-acid chain; its full sequence is 33 kDa chaperonin (296 aa).

2 disulfides stabilise this stretch: Cys-236/Cys-238 and Cys-269/Cys-272.

It belongs to the HSP33 family. In terms of processing, under oxidizing conditions two disulfide bonds are formed involving the reactive cysteines. Under reducing conditions zinc is bound to the reactive cysteines and the protein is inactive.

Its subcellular location is the cytoplasm. Its function is as follows. Redox regulated molecular chaperone. Protects both thermally unfolding and oxidatively damaged proteins from irreversible aggregation. Plays an important role in the bacterial defense system toward oxidative stress. The protein is 33 kDa chaperonin of Lactobacillus helveticus (strain DPC 4571).